We begin with the raw amino-acid sequence, 251 residues long: NADPH-dependent oxidoreductase (251 aa).

It belongs to the flavin oxidoreductase frp family. FMN serves as cofactor.

Reduces FMN, organic nitro compounds and disulfide DTNB. Involved in maintenance of the cellular redox state and the disulfide stress response. The sequence is that of NADPH-dependent oxidoreductase (nfrA) from Staphylococcus saprophyticus subsp. saprophyticus (strain ATCC 15305 / DSM 20229 / NCIMB 8711 / NCTC 7292 / S-41).